We begin with the raw amino-acid sequence, 103 residues long: N(4)-acetylcytidine amidohydrolase (103 aa).

Residues 6–100 enclose the ASCH domain; it reads ITFFQRFQDD…GESQFYVIEF (95 aa). Lys21 functions as the Proton acceptor in the catalytic mechanism. The active-site Nucleophile is the Thr24. Glu74 functions as the Proton donor in the catalytic mechanism.

The protein belongs to the N(4)-acetylcytidine amidohydrolase family.

The catalysed reaction is N(4)-acetylcytidine + H2O = cytidine + acetate + H(+). It carries out the reaction N(4)-acetyl-2'-deoxycytidine + H2O = 2'-deoxycytidine + acetate + H(+). It catalyses the reaction N(4)-acetylcytosine + H2O = cytosine + acetate + H(+). Functionally, catalyzes the hydrolysis of N(4)-acetylcytidine (ac4C). The protein is N(4)-acetylcytidine amidohydrolase of Klebsiella pneumoniae subsp. pneumoniae (strain ATCC 700721 / MGH 78578).